Here is a 433-residue protein sequence, read N- to C-terminus: Putative ankyrin repeat protein R784 (433 aa).

ANK repeat units lie at residues 44 to 70 (NQNL…KTDV), 71 to 101 (NGLK…NNDL), 102 to 131 (LDLH…IVII), 179 to 205 (FYDS…NQCS), 206 to 235 (VRQK…RIFS), 237 to 264 (RRLI…IDLA), 265 to 294 (QNNF…DIHF), 296 to 321 (NGEC…NKVY), 322 to 351 (MSEK…ACMS), and 380 to 409 (NMRK…KLRE).

The polypeptide is Putative ankyrin repeat protein R784 (Acanthamoeba polyphaga mimivirus (APMV)).